Reading from the N-terminus, the 388-residue chain is Putative 8-amino-7-oxononanoate synthase (388 aa).

Residue Arg23 coordinates substrate. 110–111 contacts pyridoxal 5'-phosphate; that stretch reads GY. His135 is a substrate binding site. Pyridoxal 5'-phosphate is bound by residues Ser182, 207–210, and 238–241; these read DDAH and TLSK. An N6-(pyridoxal phosphate)lysine modification is found at Lys241. Thr355 provides a ligand contact to substrate.

It belongs to the class-II pyridoxal-phosphate-dependent aminotransferase family. BioF subfamily. As to quaternary structure, homodimer. The cofactor is pyridoxal 5'-phosphate.

The enzyme catalyses 6-carboxyhexanoyl-[ACP] + L-alanine + H(+) = (8S)-8-amino-7-oxononanoate + holo-[ACP] + CO2. The protein operates within cofactor biosynthesis; biotin biosynthesis. Functionally, catalyzes the decarboxylative condensation of pimeloyl-[acyl-carrier protein] and L-alanine to produce 8-amino-7-oxononanoate (AON), [acyl-carrier protein], and carbon dioxide. This chain is Putative 8-amino-7-oxononanoate synthase (bioF), found in Thermodesulfovibrio yellowstonii (strain ATCC 51303 / DSM 11347 / YP87).